We begin with the raw amino-acid sequence, 181 residues long: Large ribosomal subunit protein uL22 (181 aa).

The segment at 157 to 181 (PEAAKKPGKKTSAVEKSKKATAATH) is disordered.

This sequence belongs to the universal ribosomal protein uL22 family.

This Biphyllus lunatus (Beetle) protein is Large ribosomal subunit protein uL22 (RpL17).